The chain runs to 325 residues: DNA-directed RNA polymerase subunit alpha (325 aa).

Residues M1 to E231 form an alpha N-terminal domain (alpha-NTD) region. An alpha C-terminal domain (alpha-CTD) region spans residues I246–K325.

The protein belongs to the RNA polymerase alpha chain family. In terms of assembly, homodimer. The RNAP catalytic core consists of 2 alpha, 1 beta, 1 beta' and 1 omega subunit. When a sigma factor is associated with the core the holoenzyme is formed, which can initiate transcription.

The catalysed reaction is RNA(n) + a ribonucleoside 5'-triphosphate = RNA(n+1) + diphosphate. Its function is as follows. DNA-dependent RNA polymerase catalyzes the transcription of DNA into RNA using the four ribonucleoside triphosphates as substrates. This chain is DNA-directed RNA polymerase subunit alpha, found in Burkholderia orbicola (strain MC0-3).